The chain runs to 1072 residues: Carbamoyl phosphate synthase large chain (1072 aa).

Positions 1 to 401 are carboxyphosphate synthetic domain; that stretch reads MPKRLDINTI…SLLKAVRSLE (401 aa). 12 residues coordinate ATP: arginine 129, arginine 169, glycine 175, glycine 176, lysine 208, isoleucine 210, glutamate 215, glycine 241, valine 242, histidine 243, glutamine 284, and glutamate 298. Residues 133–327 enclose the ATP-grasp 1 domain; sequence RTLMQELNEP…IAKLAAKIAV (195 aa). Mg(2+)-binding residues include glutamine 284, glutamate 298, and asparagine 300. Mn(2+) is bound by residues glutamine 284, glutamate 298, and asparagine 300. The segment at 402-546 is oligomerization domain; the sequence is LGIYHLELDH…YSTYADENES (145 aa). The tract at residues 547 to 929 is carbamoyl phosphate synthetic domain; sequence IVTDRKSVVV…ALYKGLVASG (383 aa). The region spanning 671 to 861 is the ATP-grasp 2 domain; sequence EAALTKLGIP…MANVATKVIL (191 aa). Positions 707, 746, 752, 777, 778, 779, 780, 820, and 832 each coordinate ATP. Residues glutamine 820, glutamate 832, and asparagine 834 each contribute to the Mg(2+) site. Mn(2+) contacts are provided by glutamine 820, glutamate 832, and asparagine 834. Residues 930-1072 form the MGS-like domain; sequence INIPTHGSVI…QTKRHEVVHA (143 aa). Residues 930-1072 form an allosteric domain region; the sequence is INIPTHGSVI…QTKRHEVVHA (143 aa).

This sequence belongs to the CarB family. Composed of two chains; the small (or glutamine) chain promotes the hydrolysis of glutamine to ammonia, which is used by the large (or ammonia) chain to synthesize carbamoyl phosphate. Tetramer of heterodimers (alpha,beta)4. The cofactor is Mg(2+). Mn(2+) is required as a cofactor.

It catalyses the reaction hydrogencarbonate + L-glutamine + 2 ATP + H2O = carbamoyl phosphate + L-glutamate + 2 ADP + phosphate + 2 H(+). It carries out the reaction hydrogencarbonate + NH4(+) + 2 ATP = carbamoyl phosphate + 2 ADP + phosphate + 2 H(+). The protein operates within amino-acid biosynthesis; L-arginine biosynthesis; carbamoyl phosphate from bicarbonate: step 1/1. It participates in pyrimidine metabolism; UMP biosynthesis via de novo pathway; (S)-dihydroorotate from bicarbonate: step 1/3. Functionally, large subunit of the glutamine-dependent carbamoyl phosphate synthetase (CPSase). CPSase catalyzes the formation of carbamoyl phosphate from the ammonia moiety of glutamine, carbonate, and phosphate donated by ATP, constituting the first step of 2 biosynthetic pathways, one leading to arginine and/or urea and the other to pyrimidine nucleotides. The large subunit (synthetase) binds the substrates ammonia (free or transferred from glutamine from the small subunit), hydrogencarbonate and ATP and carries out an ATP-coupled ligase reaction, activating hydrogencarbonate by forming carboxy phosphate which reacts with ammonia to form carbamoyl phosphate. The sequence is that of Carbamoyl phosphate synthase large chain from Bacillus thuringiensis subsp. konkukian (strain 97-27).